Consider the following 275-residue polypeptide: Glutamate racemase (275 aa).

Residues 12–13 (DS) and 44–45 (YG) contribute to the substrate site. C75 serves as the catalytic Proton donor/acceptor. 76–77 (NT) contributes to the substrate binding site. C185 acts as the Proton donor/acceptor in catalysis. Residue 186 to 187 (TH) participates in substrate binding.

It belongs to the aspartate/glutamate racemases family.

The enzyme catalyses L-glutamate = D-glutamate. It functions in the pathway cell wall biogenesis; peptidoglycan biosynthesis. Its function is as follows. Provides the (R)-glutamate required for cell wall biosynthesis. In Mycolicibacterium paratuberculosis (strain ATCC BAA-968 / K-10) (Mycobacterium paratuberculosis), this protein is Glutamate racemase.